The sequence spans 184 residues: Guanylate kinase (184 aa).

Residues 5 to 183 (NGLIVITGPS…ALLEIKKLIK (179 aa)) form the Guanylate kinase-like domain. 12-19 (GPSGVGKG) provides a ligand contact to ATP.

This sequence belongs to the guanylate kinase family.

It is found in the cytoplasm. The catalysed reaction is GMP + ATP = GDP + ADP. Essential for recycling GMP and indirectly, cGMP. This Prochlorococcus marinus (strain SARG / CCMP1375 / SS120) protein is Guanylate kinase.